The primary structure comprises 335 residues: Nucleotide-binding protein CYA_0911 (335 aa).

Residue 20-27 participates in ATP binding; the sequence is GLTGSGKT. The segment at 306–335 is disordered; it reads ARFGPPPPAAGVEQQQVRIPLAGVPAPPHD.

This sequence belongs to the RapZ-like family.

Functionally, displays ATPase and GTPase activities. The sequence is that of Nucleotide-binding protein CYA_0911 from Synechococcus sp. (strain JA-3-3Ab) (Cyanobacteria bacterium Yellowstone A-Prime).